Here is an 880-residue protein sequence, read N- to C-terminus: Calcium-transporting ATPase lmo0841 (880 aa).

A run of 4 helical transmembrane segments spans residues 47–67, 68–88, 243–263, and 271–291; these read LWKL…VIAA, LVQL…VLIV, LGLG…GRVL, and MATA…AAIP. The Ca(2+) site is built by V287, A288, I290, and E292. D334 (4-aspartylphosphate intermediate) is an active-site residue. 5 helical membrane passes run 681–701, 707–727, 756–776, 819–839, and 854–874; these read IAYL…ALVL, FTAL…AIAL, AVIS…YIGM, YVIG…LPGA, and WSIA…IKVV. Residues N716 and D720 each contribute to the Ca(2+) site.

The protein belongs to the cation transport ATPase (P-type) (TC 3.A.3) family. Type IIA subfamily.

It localises to the cell membrane. It carries out the reaction Ca(2+)(in) + ATP + H2O = Ca(2+)(out) + ADP + phosphate + H(+). Its activity is regulated as follows. Phosphorylation is inhibited by EGTA and vanadate. ATPase activity is stimulated by Sr(2+). Inhibited by very high concentrations of cyclopiazonic acid (CPA). Its function is as follows. Catalyzes the hydrolysis of ATP coupled with the transport of calcium. The transport is electrogenic with a probable ATP:Ca(2+):H(+) stoichiometry of 1:1:1. May have an important role in survival of the bacterium when stressed by a combination of a high calcium concentration and alkaline pH. This chain is Calcium-transporting ATPase lmo0841, found in Listeria monocytogenes serovar 1/2a (strain ATCC BAA-679 / EGD-e).